The chain runs to 161 residues: Shikimate kinase (161 aa).

An ATP-binding site is contributed by 10-15; sequence GAGKTT. Thr-14 contacts Mg(2+). Substrate contacts are provided by Asp-28, Arg-52, and Gly-74. Arg-114 provides a ligand contact to ATP. Residue Arg-132 participates in substrate binding.

It belongs to the shikimate kinase family. In terms of assembly, monomer. Requires Mg(2+) as cofactor.

The protein localises to the cytoplasm. It catalyses the reaction shikimate + ATP = 3-phosphoshikimate + ADP + H(+). It participates in metabolic intermediate biosynthesis; chorismate biosynthesis; chorismate from D-erythrose 4-phosphate and phosphoenolpyruvate: step 5/7. Its function is as follows. Catalyzes the specific phosphorylation of the 3-hydroxyl group of shikimic acid using ATP as a cosubstrate. In Streptococcus gordonii (strain Challis / ATCC 35105 / BCRC 15272 / CH1 / DL1 / V288), this protein is Shikimate kinase.